Reading from the N-terminus, the 704-residue chain is Elongation factor G (704 aa).

A tr-type G domain is found at 8–291 (DKVRNIGIMA…AVVEYLASPV (284 aa)). GTP is bound by residues 17–24 (AHIDAGKT), 90–94 (DTPGH), and 144–147 (NKMD).

This sequence belongs to the TRAFAC class translation factor GTPase superfamily. Classic translation factor GTPase family. EF-G/EF-2 subfamily.

The protein localises to the cytoplasm. Functionally, catalyzes the GTP-dependent ribosomal translocation step during translation elongation. During this step, the ribosome changes from the pre-translocational (PRE) to the post-translocational (POST) state as the newly formed A-site-bound peptidyl-tRNA and P-site-bound deacylated tRNA move to the P and E sites, respectively. Catalyzes the coordinated movement of the two tRNA molecules, the mRNA and conformational changes in the ribosome. This is Elongation factor G from Pelodictyon phaeoclathratiforme (strain DSM 5477 / BU-1).